Here is a 239-residue protein sequence, read N- to C-terminus: Dephospho-CoA kinase (239 aa).

Residues 3–206 (IIGLTGSIAS…GGEGGEPAAG (204 aa)) enclose the DPCK domain. ATP is bound at residue 11-16 (ASGKST). The interval 197 to 239 (GGEGGEPAAGSSAHHGAGSVDPGAGPCDGPGAAPEAERRGGDR) is disordered. Low complexity predominate over residues 204–230 (AAGSSAHHGAGSVDPGAGPCDGPGAAP).

The protein belongs to the CoaE family.

It localises to the cytoplasm. It carries out the reaction 3'-dephospho-CoA + ATP = ADP + CoA + H(+). Its pathway is cofactor biosynthesis; coenzyme A biosynthesis; CoA from (R)-pantothenate: step 5/5. Its function is as follows. Catalyzes the phosphorylation of the 3'-hydroxyl group of dephosphocoenzyme A to form coenzyme A. This is Dephospho-CoA kinase from Symbiobacterium thermophilum (strain DSM 24528 / JCM 14929 / IAM 14863 / T).